The following is a 228-amino-acid chain: L-ribulose-5-phosphate 4-epimerase UlaF (228 aa).

Residues 26-27 (GN), 43-44 (SG), and 72-73 (SS) each bind substrate. Zn(2+) contacts are provided by aspartate 74, histidine 93, and histidine 95. The active-site Proton donor/acceptor is the aspartate 118. Histidine 167 lines the Zn(2+) pocket. Catalysis depends on tyrosine 225, which acts as the Proton donor/acceptor.

Belongs to the aldolase class II family. AraD/FucA subfamily. Zn(2+) serves as cofactor.

The catalysed reaction is L-ribulose 5-phosphate = D-xylulose 5-phosphate. It functions in the pathway cofactor degradation; L-ascorbate degradation; D-xylulose 5-phosphate from L-ascorbate: step 4/4. Functionally, catalyzes the isomerization of L-ribulose 5-phosphate to D-xylulose 5-phosphate. Is involved in the anaerobic L-ascorbate utilization. This is L-ribulose-5-phosphate 4-epimerase UlaF from Escherichia coli O81 (strain ED1a).